A 171-amino-acid chain; its full sequence is CASP-like protein 5A2 (171 aa).

The Cytoplasmic segment spans residues 1–39; sequence MDGSAHLRDPPGPAVLRWRLEDMHIIPGTSGSLALRICQ. A helical membrane pass occupies residues 40 to 60; it reads FSAAIVSFSVMISAANFSSVT. A topological domain (extracellular) is located at residue Ala-61. The helical transmembrane segment at 62 to 82 threads the bilayer; that stretch reads FCFLVAAMVLQCMWSLSVATI. Topologically, residues 83–106 are cytoplasmic; sequence EGYAMLVGRSLRDSPLLSLFAVGD. The helical transmembrane segment at 107–127 threads the bilayer; the sequence is WVTAVITFAGACASAGIAVLV. The Extracellular segment spans residues 128–148; it reads GRDIHRGCDVNFCGRYAAAAG. A helical membrane pass occupies residues 149 to 169; sequence MAFLSWLLISTSFLFTFWLLA. Over 170-171 the chain is Cytoplasmic; sequence TR.

It belongs to the Casparian strip membrane proteins (CASP) family. Homodimer and heterodimers.

The protein localises to the cell membrane. This is CASP-like protein 5A2 from Pteridium aquilinum subsp. aquilinum (Bracken fern).